A 334-amino-acid polypeptide reads, in one-letter code: DnaJ protein homolog 1 (334 aa).

The region spanning Asp-4–Gly-68 is the J domain. Phosphoserine is present on Ser-187.

The protein localises to the cytoplasm. The chain is DnaJ protein homolog 1 (DnaJ-1) from Drosophila melanogaster (Fruit fly).